The sequence spans 495 residues: Acetyl-coenzyme A carboxylase carboxyl transferase subunit beta, chloroplastic (495 aa).

A disordered region spans residues 187–208; that stretch reads ESRNSSENEGSSRRTRTKGSDL. A CoA carboxyltransferase N-terminal domain is found at 226-495; it reads LWVQCENCYG…PLNQKSSKIK (270 aa). The Zn(2+) site is built by Cys-230, Cys-233, Cys-249, and Cys-252. Residues 230–252 form a C4-type zinc finger; that stretch reads CENCYGLNYKKFLKSKMNICEQC.

This sequence belongs to the AccD/PCCB family. In terms of assembly, acetyl-CoA carboxylase is a heterohexamer composed of biotin carboxyl carrier protein, biotin carboxylase and 2 subunits each of ACCase subunit alpha and ACCase plastid-coded subunit beta (accD). It depends on Zn(2+) as a cofactor. As to expression, RNA expressed in leaf, root and stem; the least expression occurs in stems.

It is found in the plastid. The protein localises to the chloroplast stroma. The catalysed reaction is N(6)-carboxybiotinyl-L-lysyl-[protein] + acetyl-CoA = N(6)-biotinyl-L-lysyl-[protein] + malonyl-CoA. Its pathway is lipid metabolism; malonyl-CoA biosynthesis; malonyl-CoA from acetyl-CoA: step 1/1. Its function is as follows. Component of the acetyl coenzyme A carboxylase (ACC) complex. Biotin carboxylase (BC) catalyzes the carboxylation of biotin on its carrier protein (BCCP) and then the CO(2) group is transferred by the transcarboxylase to acetyl-CoA to form malonyl-CoA. The protein is Acetyl-coenzyme A carboxylase carboxyl transferase subunit beta, chloroplastic of Nicotiana tabacum (Common tobacco).